The chain runs to 458 residues: Phosphoglucosamine mutase (458 aa).

S102 acts as the Phosphoserine intermediate in catalysis. 4 residues coordinate Mg(2+): S102, D252, D254, and D256. Phosphoserine is present on S102.

Belongs to the phosphohexose mutase family. The cofactor is Mg(2+). Post-translationally, activated by phosphorylation.

It carries out the reaction alpha-D-glucosamine 1-phosphate = D-glucosamine 6-phosphate. In terms of biological role, catalyzes the conversion of glucosamine-6-phosphate to glucosamine-1-phosphate. In Anaeromyxobacter dehalogenans (strain 2CP-C), this protein is Phosphoglucosamine mutase.